Here is a 1061-residue protein sequence, read N- to C-terminus: Carbamoyl phosphate synthase large chain (1061 aa).

The segment at M1–E401 is carboxyphosphate synthetic domain. ATP is bound by residues R129, R169, G175, G176, K208, I210, E215, G241, I242, H243, Q284, and E298. Residues K133–V327 form the ATP-grasp 1 domain. Residues Q284, E298, and N300 each contribute to the Mg(2+) site. Positions 284, 298, and 300 each coordinate Mn(2+). The tract at residues I402–S546 is oligomerization domain. Positions K547–K929 are carbamoyl phosphate synthetic domain. Positions D671 to L861 constitute an ATP-grasp 2 domain. ATP is bound by residues R707, A746, L748, E752, G777, V778, H779, S780, Q820, and E832. Residues Q820, E832, and N834 each contribute to the Mg(2+) site. Mn(2+) contacts are provided by Q820, E832, and N834. The MGS-like domain occupies M930–L1061. The interval M930–L1061 is allosteric domain.

It belongs to the CarB family. As to quaternary structure, composed of two chains; the small (or glutamine) chain promotes the hydrolysis of glutamine to ammonia, which is used by the large (or ammonia) chain to synthesize carbamoyl phosphate. Tetramer of heterodimers (alpha,beta)4. Mg(2+) is required as a cofactor. The cofactor is Mn(2+).

It catalyses the reaction hydrogencarbonate + L-glutamine + 2 ATP + H2O = carbamoyl phosphate + L-glutamate + 2 ADP + phosphate + 2 H(+). It carries out the reaction hydrogencarbonate + NH4(+) + 2 ATP = carbamoyl phosphate + 2 ADP + phosphate + 2 H(+). Its pathway is amino-acid biosynthesis; L-arginine biosynthesis; carbamoyl phosphate from bicarbonate: step 1/1. It functions in the pathway pyrimidine metabolism; UMP biosynthesis via de novo pathway; (S)-dihydroorotate from bicarbonate: step 1/3. Functionally, large subunit of the glutamine-dependent carbamoyl phosphate synthetase (CPSase). CPSase catalyzes the formation of carbamoyl phosphate from the ammonia moiety of glutamine, carbonate, and phosphate donated by ATP, constituting the first step of 2 biosynthetic pathways, one leading to arginine and/or urea and the other to pyrimidine nucleotides. The large subunit (synthetase) binds the substrates ammonia (free or transferred from glutamine from the small subunit), hydrogencarbonate and ATP and carries out an ATP-coupled ligase reaction, activating hydrogencarbonate by forming carboxy phosphate which reacts with ammonia to form carbamoyl phosphate. This chain is Carbamoyl phosphate synthase large chain, found in Ligilactobacillus salivarius (strain UCC118) (Lactobacillus salivarius).